Reading from the N-terminus, the 289-residue chain is MAEQTASGYIQHHLQNLTFGHLPNGDWGFAHTAAEAKEMGFWAFHVDTLGWSVALGLIFVLIFRMAAKKATSGQPGALQNFVEVLVEFVDGSVKDSFHGRSAVIAPLALTIFVWVFLMNAVDLVPVDWIPQLAMMISGDEHIPFRAVPTTDPNATLGMALSVFALIIFYSIKVKGIGGFIGELTLHPFGSKNIFVQALLIPVNFLLEFVTLIAKPISLALRLFGNMYAGELVFILIAVMFGSGLLWLSGLGIVLQWAWAVFHILIITLQAFIFMMLTIVYLSMAHEDNH.

6 helical membrane-spanning segments follow: residues 43 to 63 (AFHVDTLGWSVALGLIFVLIF), 101 to 121 (SAVIAPLALTIFVWVFLMNAV), 160 to 180 (LSVFALIIFYSIKVKGIGGFI), 193 to 213 (IFVQALLIPVNFLLEFVTLIA), 232 to 252 (VFILIAVMFGSGLLWLSGLGI), and 259 to 279 (AVFHILIITLQAFIFMMLTIV).

Belongs to the ATPase A chain family. F-type ATPases have 2 components, CF(1) - the catalytic core - and CF(0) - the membrane proton channel. CF(1) has five subunits: alpha(3), beta(3), gamma(1), delta(1), epsilon(1). CF(0) has three main subunits: a(1), b(2) and c(9-12). The alpha and beta chains form an alternating ring which encloses part of the gamma chain. CF(1) is attached to CF(0) by a central stalk formed by the gamma and epsilon chains, while a peripheral stalk is formed by the delta and b chains.

It is found in the cell inner membrane. Functionally, key component of the proton channel; it plays a direct role in the translocation of protons across the membrane. This is ATP synthase subunit a from Pseudomonas syringae pv. tomato (strain ATCC BAA-871 / DC3000).